Reading from the N-terminus, the 579-residue chain is Cytochrome P450 monooxygenase prx9 (579 aa).

Residues 6-25 (LPLGSFVGTTLLLFILYKLV) form a helical membrane-spanning segment. N-linked (GlcNAc...) asparagine glycosylation is found at N194, N292, and N390. C512 contributes to the heme binding site.

Belongs to the cytochrome P450 family. Heme is required as a cofactor.

The protein localises to the membrane. Its pathway is sesquiterpene biosynthesis. Its function is as follows. Cytochrome P450 monooxygenase; part of the gene cluster that mediates the biosynthesis of PR-toxin, a bicyclic sesquiterpene belonging to the eremophilane class and acting as a mycotoxin. The first step of the pathway is catalyzed by the aristolochene synthase which performs the cyclization of trans,trans-farnesyl diphosphate (FPP) to the bicyclic sesquiterpene aristolochene. Following the formation of aristolochene, the non-oxygenated aristolochene is converted to the trioxygenated intermediate eremofortin B, via 7-epi-neopetasone. This conversion appears to involve three enzymes, a hydroxysterol oxidase-like enzyme, the quinone-oxidase prx3 that forms the quinone-type-structure in the bicyclic nucleus of aristolochene with the C8-oxo group and the C-3 hydroxyl group, and the P450 monooxygenase prx9 that introduces the epoxide at the double bond between carbons 1 and 2. No monoxy or dioxy-intermediates have been reported to be released to the broth, so these three early oxidative reactions may be coupled together. Eremofortin B is further oxidized by another P450 monooxygenase, that introduces a second epoxide between carbons 7 and 11 prior to acetylation to eremofortin A by the acetyltransferase prx11. The second epoxidation may be performed by a second P450 monooxygenase. After the acetylation step, eremofortin A is converted to eremofortin C and then to PR-toxin. First the conversion of eremofortin A to eremofortin C proceeds by oxidation of the side chain of the molecule at C-12 and is catalyzed by the short-chain oxidoreductase prx1. The cytochrome P450 monooxygenase prx8 also plays a role in this step. The primary alcohol formed at C-12 is finally oxidized by the short-chain alcohol dehydrogenase prx4 that forms PR-toxin. In Penicillium rubens (strain ATCC 28089 / DSM 1075 / NRRL 1951 / Wisconsin 54-1255) (Penicillium chrysogenum), this protein is Cytochrome P450 monooxygenase prx9.